We begin with the raw amino-acid sequence, 301 residues long: Methionyl-tRNA formyltransferase (301 aa).

110–113 (SLLP) contacts (6S)-5,6,7,8-tetrahydrofolate.

It belongs to the Fmt family.

It carries out the reaction L-methionyl-tRNA(fMet) + (6R)-10-formyltetrahydrofolate = N-formyl-L-methionyl-tRNA(fMet) + (6S)-5,6,7,8-tetrahydrofolate + H(+). In terms of biological role, attaches a formyl group to the free amino group of methionyl-tRNA(fMet). The formyl group appears to play a dual role in the initiator identity of N-formylmethionyl-tRNA by promoting its recognition by IF2 and preventing the misappropriation of this tRNA by the elongation apparatus. In Anaplasma phagocytophilum (strain HZ), this protein is Methionyl-tRNA formyltransferase.